Consider the following 211-residue polypeptide: UPF0319 protein VC_A0026 (211 aa).

Positions 1–21 (MKPMQRLTCLLALCFAASASA) are cleaved as a signal peptide.

The protein belongs to the UPF0319 family.

This Vibrio cholerae serotype O1 (strain ATCC 39315 / El Tor Inaba N16961) protein is UPF0319 protein VC_A0026.